We begin with the raw amino-acid sequence, 602 residues long: Translation factor GUF1 homolog, organellar chromatophore (602 aa).

Residues 7–189 enclose the tr-type G domain; it reads SRIRNFCIIA…AIVERIPPPV (183 aa). GTP-binding positions include 16 to 23, 82 to 86, and 136 to 139; these read AHIDHGKS, DTPGH, and NKID.

Belongs to the TRAFAC class translation factor GTPase superfamily. Classic translation factor GTPase family. LepA subfamily.

Its subcellular location is the plastid. The protein localises to the organellar chromatophore. It catalyses the reaction GTP + H2O = GDP + phosphate + H(+). Its function is as follows. Promotes protein synthesis. May act as a fidelity factor of the translation reaction, by catalyzing a one-codon backward translocation of tRNAs on improperly translocated ribosomes. The protein is Translation factor GUF1 homolog, organellar chromatophore of Paulinella chromatophora.